Here is a 560-residue protein sequence, read N- to C-terminus: IQ motif and ankyrin repeat domain-containing protein 1 (560 aa).

The interval 1-72 is disordered; the sequence is MDSKKGRPKA…DRAARAIQGA (72 aa). In terms of domain architecture, IQ spans 62-91; that stretch reads EDRAARAIQGAFRQLRARRELARRREERRE. ANK repeat units follow at residues 191–223 and 224–253; these read YGNT…SKGA and FGPT…DPRV. Residues 281–398 are a coiled coil; sequence LTEAMLQNME…RLELREQTQE (118 aa).

The polypeptide is IQ motif and ankyrin repeat domain-containing protein 1 (Homo sapiens (Human)).